Consider the following 133-residue polypeptide: Ribonuclease P protein component (133 aa).

Belongs to the RnpA family. Consists of a catalytic RNA component (M1 or rnpB) and a protein subunit.

It carries out the reaction Endonucleolytic cleavage of RNA, removing 5'-extranucleotides from tRNA precursor.. RNaseP catalyzes the removal of the 5'-leader sequence from pre-tRNA to produce the mature 5'-terminus. It can also cleave other RNA substrates such as 4.5S RNA. The protein component plays an auxiliary but essential role in vivo by binding to the 5'-leader sequence and broadening the substrate specificity of the ribozyme. This is Ribonuclease P protein component from Corynebacterium efficiens (strain DSM 44549 / YS-314 / AJ 12310 / JCM 11189 / NBRC 100395).